A 292-amino-acid polypeptide reads, in one-letter code: MELKRENVLIEALPYMQEFYDSIMVIKVGGNAMVSAQIMEDIIKDIVLLRYVGIKPVIVHGGGPEITEKMERMGKKAEFFQGLRITDDETMEIARMVLVGNINTKIVSLIGLFGGKGVGFTGYDGRMILGHKQAAKHVLIDGVETEVDIGWVGESEVINPEILHIMLEKGYIPVISPIAVDAKGNALNINADTVAGDIAAALHAKKLILMTDVSGLLRNIKDPGSRISRVKLDDIDLLIEEGVISGGMIPKIKGAAVAVKSGVERAHIINGSVSHSMLLELFTDGGVGTMIY.

Substrate contacts are provided by residues 62–63 (GG), R84, and N188.

It belongs to the acetylglutamate kinase family. ArgB subfamily.

Its subcellular location is the cytoplasm. It catalyses the reaction N-acetyl-L-glutamate + ATP = N-acetyl-L-glutamyl 5-phosphate + ADP. It functions in the pathway amino-acid biosynthesis; L-arginine biosynthesis; N(2)-acetyl-L-ornithine from L-glutamate: step 2/4. Functionally, catalyzes the ATP-dependent phosphorylation of N-acetyl-L-glutamate. The chain is Acetylglutamate kinase from Methanosarcina mazei (strain ATCC BAA-159 / DSM 3647 / Goe1 / Go1 / JCM 11833 / OCM 88) (Methanosarcina frisia).